Consider the following 609-residue polypeptide: Snake venom metalloproteinase-disintegrin-like mocarhagin (609 aa).

The N-terminal stretch at 1 to 20 is a signal peptide; that stretch reads MIQALLVAICLAVFPYQGSS. The propeptide occupies 21-191; sequence IILESGNVND…DEPIEKSSQL (171 aa). A Peptidase M12B domain is found at 205 to 400; the sequence is KYIEFYVVVD…DRPQCILNKP (196 aa). Positions 208 and 292 each coordinate Ca(2+). N-linked (GlcNAc...) asparagine glycosylation is present at N303. Cystine bridges form between C316-C395, C356-C379, and C358-C363. Zn(2+)-binding residues include H341 and H345. Residues C395, N398, V410, N413, F415, E417, E420, and D423 each coordinate Ca(2+). The Disintegrin domain occupies 408 to 494; the sequence is PPVCGNYFVE…KCPKDSFQRN (87 aa). Disulfide bonds link C411–C440, C422–C435, C424–C430, C434–C457, C448–C454, C453–C479, C466–C486, C473–C505, C498–C510, C517–C567, C532–C575, C545–C555, C562–C601, and C595–C606. The D/ECD-tripeptide signature appears at 472-474; that stretch reads DCD. A glycan (N-linked (GlcNAc...) asparagine) is linked at N507.

This sequence belongs to the venom metalloproteinase (M12B) family. P-III subfamily. P-IIIa sub-subfamily. Monomer. Requires Zn(2+) as cofactor. In terms of tissue distribution, expressed by the venom gland.

It is found in the secreted. With respect to regulation, inhibited by EDTA and diisopropyl fluorophosphate (DFP). Also inhibited by an excess of zinc or calcium ions. Its function is as follows. Snake venom zinc metalloproteinase that inhibits platelet aggregation by cleaving platelet glycoprotein Ib alpha (GP1BA) at Glu-298/Asp-299, and abolishes binding of von Willebrand factor (VWF) to GPIBA. Cleaves P-selectin glycoprotein ligand-1 (PSGL-1/SELPLG) at Tyr-51/Asp-52, and completely abolishes the binding of PSGL-1 to P-selectin. Anionic amino acid sequences containing sulfated tyrosines are needed for cleavages. Inhibits the thrombin-induced platelet aggregation, and the thrombin-induced release of ATP and ADP. Has lectin activity (inhibited by heparin). The chain is Snake venom metalloproteinase-disintegrin-like mocarhagin from Naja mossambica (Mozambique spitting cobra).